The following is a 179-amino-acid chain: Large ribosomal subunit protein uL6 (179 aa).

The protein belongs to the universal ribosomal protein uL6 family. Part of the 50S ribosomal subunit.

Its function is as follows. This protein binds to the 23S rRNA, and is important in its secondary structure. It is located near the subunit interface in the base of the L7/L12 stalk, and near the tRNA binding site of the peptidyltransferase center. The protein is Large ribosomal subunit protein uL6 of Rhodococcus opacus (strain B4).